The chain runs to 372 residues: NAD(P)H-quinone oxidoreductase subunit 1 (372 aa).

8 helical membrane-spanning segments follow: residues 27-47, 97-117, 128-148, 166-186, 204-224, 249-269, 308-328, and 351-371; these read AIWM…GVLV, WLFT…FLIV, VGMG…GLLM, AAQS…IAMM, ILGW…IAAL, YSGM…ILSS, SLGI…AILL, and VGLV…FAFG.

The protein belongs to the complex I subunit 1 family. As to quaternary structure, NDH-1 is composed of at least 11 different subunits.

It localises to the cellular thylakoid membrane. The enzyme catalyses a plastoquinone + NADH + (n+1) H(+)(in) = a plastoquinol + NAD(+) + n H(+)(out). It carries out the reaction a plastoquinone + NADPH + (n+1) H(+)(in) = a plastoquinol + NADP(+) + n H(+)(out). Its function is as follows. NDH-1 shuttles electrons from an unknown electron donor, via FMN and iron-sulfur (Fe-S) centers, to quinones in the respiratory and/or the photosynthetic chain. The immediate electron acceptor for the enzyme in this species is believed to be plastoquinone. Couples the redox reaction to proton translocation, and thus conserves the redox energy in a proton gradient. This chain is NAD(P)H-quinone oxidoreductase subunit 1, found in Nostoc punctiforme (strain ATCC 29133 / PCC 73102).